The following is a 72-amino-acid chain: Translation initiation factor IF-1 (72 aa).

In terms of domain architecture, S1-like spans 2–72 (AKEDCIEMQG…NKGRIIFRSR (71 aa)).

This sequence belongs to the IF-1 family. As to quaternary structure, component of the 30S ribosomal translation pre-initiation complex which assembles on the 30S ribosome in the order IF-2 and IF-3, IF-1 and N-formylmethionyl-tRNA(fMet); mRNA recruitment can occur at any time during PIC assembly.

Its subcellular location is the cytoplasm. Functionally, one of the essential components for the initiation of protein synthesis. Stabilizes the binding of IF-2 and IF-3 on the 30S subunit to which N-formylmethionyl-tRNA(fMet) subsequently binds. Helps modulate mRNA selection, yielding the 30S pre-initiation complex (PIC). Upon addition of the 50S ribosomal subunit IF-1, IF-2 and IF-3 are released leaving the mature 70S translation initiation complex. This is Translation initiation factor IF-1 from Pasteurella multocida (strain Pm70).